The primary structure comprises 244 residues: MSPEVLSARPGFVRNLMDVMMKPVLQLPPMTCQRIREIDSLAMEQFQMPGIILMENAGRGAAELIEELAPEGNVLILCGKGNNGGDGFTIARHLQLAGREVMILAMAATNELQGDAAIQAKIAEAAGIKIQVVGEAVEAGRLPATDIVVDGLLGTGAKPPLRGRYAEVVEAANASSAIRIALDIPTGMNGDTGETGETTFRADHTLTFAAPKVGFEKLGAARFTGEVHVISIGVPLELLRQFSV.

The 206-residue stretch at Ile-35–Arg-240 folds into the YjeF N-terminal domain. Residue Asn-82–Asp-86 coordinates (6S)-NADPHX. Positions 83 and 150 each coordinate K(+). Residues Gly-154–Pro-160, Tyr-165, and Asp-183 contribute to the (6S)-NADPHX site. Residue Thr-186 coordinates K(+).

This sequence belongs to the NnrE/AIBP family. Requires K(+) as cofactor.

The enzyme catalyses (6R)-NADHX = (6S)-NADHX. It catalyses the reaction (6R)-NADPHX = (6S)-NADPHX. Functionally, catalyzes the epimerization of the S- and R-forms of NAD(P)HX, a damaged form of NAD(P)H that is a result of enzymatic or heat-dependent hydration. This is a prerequisite for the S-specific NAD(P)H-hydrate dehydratase to allow the repair of both epimers of NAD(P)HX. The sequence is that of NAD(P)H-hydrate epimerase from Rhodopirellula baltica (strain DSM 10527 / NCIMB 13988 / SH1).